A 409-amino-acid polypeptide reads, in one-letter code: Aspartic protease pepA (409 aa).

An N-terminal signal peptide occupies residues 1 to 19; the sequence is MPSIVSLTAALTFVGAVIA. Positions 20 to 65 are cleaved as a propeptide — activation peptide; sequence SPVEKRSAFSVEQVPHTTYLKNGPAQKVKTLRKYGKPVPQSLLDAA. The Peptidase A1 domain maps to 97–404; that stretch reads YLSPVTVGST…PDSPPRIGLA (308 aa). Residues Asp113 and Asp293 contribute to the active site. The cysteines at positions 329 and 364 are disulfide-linked. N-linked (GlcNAc...) asparagine glycosylation is present at Asn335.

Belongs to the peptidase A1 family. In terms of assembly, monomer.

Its subcellular location is the secreted. Its function is as follows. Secreted aspartic endopeptidase that allows assimilation of proteinaceous substrates. The scissile peptide bond is attacked by a nucleophilic water molecule activated by two aspartic residues in the active site. Shows a broad primary substrate specificity. Favors hydrophobic residues at the P1 and P1' positions. In Leptosphaeria maculans (strain JN3 / isolate v23.1.3 / race Av1-4-5-6-7-8) (Blackleg fungus), this protein is Aspartic protease pepA.